The chain runs to 193 residues: Adenine phosphoribosyltransferase (193 aa).

This sequence belongs to the purine/pyrimidine phosphoribosyltransferase family. In terms of assembly, homodimer.

The protein resides in the cytoplasm. The catalysed reaction is AMP + diphosphate = 5-phospho-alpha-D-ribose 1-diphosphate + adenine. The protein operates within purine metabolism; AMP biosynthesis via salvage pathway; AMP from adenine: step 1/1. In terms of biological role, catalyzes a salvage reaction resulting in the formation of AMP, that is energically less costly than de novo synthesis. This Bifidobacterium longum (strain DJO10A) protein is Adenine phosphoribosyltransferase.